We begin with the raw amino-acid sequence, 761 residues long: Neurotrypsin (761 aa).

The first 21 residues, 1–21 (MALARCVLAVILGALSVVARA), serve as a signal peptide directing secretion. The interval 25–87 (SRSPLHRPHP…PPTIPRRCGA (63 aa)) is disordered. Positions 38 to 48 (RSQHAHYLPSS) are enriched in low complexity. A Kringle domain is found at 85–157 (CGAGESWGNA…GKVDWGYCDC (73 aa)). Intrachain disulfides connect Cys85-Cys157, Cys101-Cys141, Cys130-Cys155, Cys191-Cys255, Cys204-Cys265, Cys235-Cys245, Cys298-Cys361, Cys311-Cys371, Cys341-Cys351, Cys411-Cys475, Cys424-Cys485, Cys455-Cys465, Cys505-Cys636, Cys547-Cys563, Cys651-Cys717, Cys680-Cys694, and Cys707-Cys736. Asn93 carries N-linked (GlcNAc...) asparagine glycosylation. SRCR domains are found at residues 166–267 (IRLV…SCVP), 273–373 (IRLA…TCYP), and 386–487 (IRLV…ICDY). Residues 505–516 (CGLRLLHRRQKR) form a zymogen activation region region. The Peptidase S1 domain maps to 517-760 (IIGGNNSLRG…FVPWIKSVTS (244 aa)). N-linked (GlcNAc...) asparagine glycosylation occurs at Asn521. Residue His562 is the Charge relay system of the active site. Asn569 carries N-linked (GlcNAc...) asparagine glycosylation. Asp612 acts as the Charge relay system in catalysis. The active-site Charge relay system is Ser711.

This sequence belongs to the peptidase S1 family. Most abundant in cerebral cortex, hippocampus and amygdala.

Its subcellular location is the secreted. Functionally, plays a role in neuronal plasticity and the proteolytic action may subserve structural reorganizations associated with learning and memory operations. This chain is Neurotrypsin (Prss12), found in Mus musculus (Mouse).